We begin with the raw amino-acid sequence, 240 residues long: ATP-dependent dethiobiotin synthetase BioD (240 aa).

12–17 (EIGKTV) serves as a coordination point for ATP. Thr16 contributes to the Mg(2+) binding site. The active site involves Lys37. Ser41 contributes to the substrate binding site. Residues Asp54, 115-118 (EGSG), 179-180 (NQ), and 207-209 (PYI) each bind ATP. The Mg(2+) site is built by Asp54 and Glu115.

The protein belongs to the dethiobiotin synthetase family. In terms of assembly, homodimer. Mg(2+) is required as a cofactor.

The protein localises to the cytoplasm. It carries out the reaction (7R,8S)-7,8-diammoniononanoate + CO2 + ATP = (4R,5S)-dethiobiotin + ADP + phosphate + 3 H(+). Its pathway is cofactor biosynthesis; biotin biosynthesis; biotin from 7,8-diaminononanoate: step 1/2. Catalyzes a mechanistically unusual reaction, the ATP-dependent insertion of CO2 between the N7 and N8 nitrogen atoms of 7,8-diaminopelargonic acid (DAPA, also called 7,8-diammoniononanoate) to form a ureido ring. This Clostridium acetobutylicum (strain ATCC 824 / DSM 792 / JCM 1419 / IAM 19013 / LMG 5710 / NBRC 13948 / NRRL B-527 / VKM B-1787 / 2291 / W) protein is ATP-dependent dethiobiotin synthetase BioD.